Consider the following 219-residue polypeptide: Large ribosomal subunit protein mL67 (219 aa).

The protein belongs to the mitochondrion-specific ribosomal protein mL67 family.

The protein localises to the nucleus. It is found in the mitochondrion. In terms of biological role, transcription factor involved in regulation of RNA polymerase II-dependent transcription. Also involved in regulation of mitochondrial DNA recombination, maintenance and repair, and generation of homoplasmic cells. This Kluyveromyces lactis (strain ATCC 8585 / CBS 2359 / DSM 70799 / NBRC 1267 / NRRL Y-1140 / WM37) (Yeast) protein is Large ribosomal subunit protein mL67 (MHR1).